The sequence spans 313 residues: GTP cyclohydrolase MptA (313 aa).

The protein belongs to the GTP cyclohydrolase IV family. Homodimer. Fe(2+) serves as cofactor.

It catalyses the reaction GTP + H2O = 7,8-dihydroneopterin 2',3'-cyclic phosphate + formate + diphosphate + H(+). The protein operates within cofactor biosynthesis; 5,6,7,8-tetrahydromethanopterin biosynthesis. Its function is as follows. Converts GTP to 7,8-dihydro-D-neopterin 2',3'-cyclic phosphate, the first intermediate in the biosynthesis of coenzyme methanopterin. In Methanoculleus marisnigri (strain ATCC 35101 / DSM 1498 / JR1), this protein is GTP cyclohydrolase MptA.